The primary structure comprises 205 residues: Large ribosomal subunit protein uL3 (205 aa).

It belongs to the universal ribosomal protein uL3 family. Part of the 50S ribosomal subunit. Forms a cluster with proteins L14 and L19.

Functionally, one of the primary rRNA binding proteins, it binds directly near the 3'-end of the 23S rRNA, where it nucleates assembly of the 50S subunit. This chain is Large ribosomal subunit protein uL3, found in Parabacteroides distasonis (strain ATCC 8503 / DSM 20701 / CIP 104284 / JCM 5825 / NCTC 11152).